Consider the following 289-residue polypeptide: uncharacterized protein (289 aa).

An N-terminal signal peptide occupies residues 1–19; that stretch reads MAKWLGAPLARGVSTATRA. The next 2 membrane-spanning stretches (helical) occupy residues 90-110 and 257-277; these read GLLA…GWGV and AALS…LVFA.

It is found in the cell membrane. This is an uncharacterized protein from Mycobacterium tuberculosis (strain ATCC 25618 / H37Rv).